The primary structure comprises 269 residues: Tryptophan synthase alpha chain (269 aa).

Residues Glu54 and Asp65 each act as proton acceptor in the active site.

This sequence belongs to the TrpA family. As to quaternary structure, tetramer of two alpha and two beta chains.

The catalysed reaction is (1S,2R)-1-C-(indol-3-yl)glycerol 3-phosphate + L-serine = D-glyceraldehyde 3-phosphate + L-tryptophan + H2O. The protein operates within amino-acid biosynthesis; L-tryptophan biosynthesis; L-tryptophan from chorismate: step 5/5. Functionally, the alpha subunit is responsible for the aldol cleavage of indoleglycerol phosphate to indole and glyceraldehyde 3-phosphate. This Synechococcus sp. (strain CC9902) protein is Tryptophan synthase alpha chain.